The following is a 264-amino-acid chain: Low molecular mass lipoprotein PBMHP-12 (264 aa).

Positions 1–16 (MKLLVVFAMCVPAASA) are cleaved as a signal peptide.

Belongs to the 30 kDa lipoprotein family.

It is found in the secreted. The protein is Low molecular mass lipoprotein PBMHP-12 of Bombyx mori (Silk moth).